Here is a 506-residue protein sequence, read N- to C-terminus: Maturase K (506 aa).

It belongs to the intron maturase 2 family. MatK subfamily.

It localises to the plastid. The protein resides in the chloroplast. Its function is as follows. Usually encoded in the trnK tRNA gene intron. Probably assists in splicing its own and other chloroplast group II introns. This is Maturase K from Andromeda polifolia (Bog rosemary).